Consider the following 167-residue polypeptide: Kininogen-1 (167 aa).

Residues 1-23 form the signal peptide; the sequence is MRLWFCLSFFIILCLEHFPGTLA.

The protein belongs to the bradykinin-related peptide family. In terms of tissue distribution, expressed by the skin glands.

It localises to the secreted. Vasodilator. Bradykinin produces in vitro relaxation of rat arterial smooth muscle and constriction of intestinal smooth muscle. May target bradykinin receptors (BDKRB). This Bombina orientalis (Oriental fire-bellied toad) protein is Kininogen-1.